The primary structure comprises 101 residues: RNA-binding protein Hfq (101 aa).

Positions 9-68 (DPYLNALRRERIPVSIYLVNGIKLQGQIESFDQFIILLKNTVSQMVYKHAISTVVPARSI) constitute a Sm domain. The tract at residues 68 to 91 (ISHNNNGSSQAQAPQQAVQTTQPV) is disordered. The segment covering 77 to 91 (QAQAPQQAVQTTQPV) has biased composition (low complexity).

This sequence belongs to the Hfq family. In terms of assembly, homohexamer.

In terms of biological role, RNA chaperone that binds small regulatory RNA (sRNAs) and mRNAs to facilitate mRNA translational regulation in response to envelope stress, environmental stress and changes in metabolite concentrations. Also binds with high specificity to tRNAs. This Haemophilus ducreyi (strain 35000HP / ATCC 700724) protein is RNA-binding protein Hfq.